A 115-amino-acid polypeptide reads, in one-letter code: Large ribosomal subunit protein bL19 (115 aa).

It belongs to the bacterial ribosomal protein bL19 family.

Functionally, this protein is located at the 30S-50S ribosomal subunit interface and may play a role in the structure and function of the aminoacyl-tRNA binding site. In Francisella tularensis subsp. tularensis (strain FSC 198), this protein is Large ribosomal subunit protein bL19.